We begin with the raw amino-acid sequence, 51 residues long: ATP synthase F(1) complex subunit epsilon, mitochondrial (51 aa).

N6-acetyllysine; alternate occurs at positions 21, 32, and 37. Lys-21, Lys-32, and Lys-37 each carry N6-succinyllysine; alternate. Lys-44 is modified (N6-acetyllysine).

Belongs to the eukaryotic ATPase epsilon family. Component of the ATP synthase complex composed at least of ATP5F1A/subunit alpha, ATP5F1B/subunit beta, ATP5MC1/subunit c (homooctomer), MT-ATP6/subunit a, MT-ATP8/subunit 8, ATP5ME/subunit e, ATP5MF/subunit f, ATP5MG/subunit g, ATP5MK/subunit k, ATP5MJ/subunit j, ATP5F1C/subunit gamma, ATP5F1D/subunit delta, ATP5F1E/subunit epsilon, ATP5PF/subunit F6, ATP5PB/subunit b, ATP5PD/subunit d, ATP5PO/subunit OSCP. ATP synthase complex consists of a soluble F(1) head domain (subunits alpha(3) and beta(3)) - the catalytic core - and a membrane F(0) domain - the membrane proton channel (subunits c, a, 8, e, f, g, k and j). These two domains are linked by a central stalk (subunits gamma, delta, and epsilon) rotating inside the F1 region and a stationary peripheral stalk (subunits F6, b, d, and OSCP). As to expression, ubiquitous.

The protein resides in the mitochondrion. Its subcellular location is the mitochondrion inner membrane. Functionally, subunit epsilon, of the mitochondrial membrane ATP synthase complex (F(1)F(0) ATP synthase or Complex V) that produces ATP from ADP in the presence of a proton gradient across the membrane which is generated by electron transport complexes of the respiratory chain. ATP synthase complex consist of a soluble F(1) head domain - the catalytic core - and a membrane F(1) domain - the membrane proton channel. These two domains are linked by a central stalk rotating inside the F(1) region and a stationary peripheral stalk. During catalysis, ATP synthesis in the catalytic domain of F(1) is coupled via a rotary mechanism of the central stalk subunits to proton translocation. In vivo, can only synthesize ATP although its ATP hydrolase activity can be activated artificially in vitro. May be essential for the assembly of F(1) and may play an important role in the incorporation of the hydrophobic subunit c into the F(1)-c oligomer rotor of the mitochondrial ATP synthase complex. The polypeptide is ATP synthase F(1) complex subunit epsilon, mitochondrial (Homo sapiens (Human)).